A 203-amino-acid chain; its full sequence is NADH-ubiquinone oxidoreductase chain 6 (203 aa).

The next 5 helical transmembrane spans lie at S16–S36, V40–I60, L70–I90, Y102–I122, and W179–I199.

This sequence belongs to the complex I subunit 6 family.

It is found in the mitochondrion membrane. It catalyses the reaction a ubiquinone + NADH + 5 H(+)(in) = a ubiquinol + NAD(+) + 4 H(+)(out). Its function is as follows. Core subunit of the mitochondrial membrane respiratory chain NADH dehydrogenase (Complex I) that is believed to belong to the minimal assembly required for catalysis. Complex I functions in the transfer of electrons from NADH to the respiratory chain. The immediate electron acceptor for the enzyme is believed to be ubiquinone. In Trichophyton rubrum (Athlete's foot fungus), this protein is NADH-ubiquinone oxidoreductase chain 6 (ND6).